A 349-amino-acid chain; its full sequence is Protein-glutamate methylesterase/protein-glutamine glutaminase (349 aa).

In terms of domain architecture, Response regulatory spans 5 to 122 (RVLSVDDSAL…REGMLAYSEM (118 aa)). 4-aspartylphosphate is present on Asp-56. The region spanning 152–344 (LLSSEKLIAI…QQMLAKISAG (193 aa)) is the CheB-type methylesterase domain. Catalysis depends on residues Ser-164, His-190, and Asp-286.

It belongs to the CheB family. Phosphorylated by CheA. Phosphorylation of the N-terminal regulatory domain activates the methylesterase activity.

The protein localises to the cytoplasm. It carries out the reaction [protein]-L-glutamate 5-O-methyl ester + H2O = L-glutamyl-[protein] + methanol + H(+). The enzyme catalyses L-glutaminyl-[protein] + H2O = L-glutamyl-[protein] + NH4(+). Its function is as follows. Involved in chemotaxis. Part of a chemotaxis signal transduction system that modulates chemotaxis in response to various stimuli. Catalyzes the demethylation of specific methylglutamate residues introduced into the chemoreceptors (methyl-accepting chemotaxis proteins or MCP) by CheR. Also mediates the irreversible deamidation of specific glutamine residues to glutamic acid. This chain is Protein-glutamate methylesterase/protein-glutamine glutaminase, found in Escherichia coli O6:H1 (strain CFT073 / ATCC 700928 / UPEC).